A 172-amino-acid polypeptide reads, in one-letter code: uncharacterized protein (172 aa).

3 helical membrane-spanning segments follow: residues 16–36, 68–88, and 89–109; these read IMIV…AYLI, SFLI…AGEL, and VISH…YIII.

The protein localises to the cell membrane. This is an uncharacterized protein from Methanocaldococcus jannaschii (strain ATCC 43067 / DSM 2661 / JAL-1 / JCM 10045 / NBRC 100440) (Methanococcus jannaschii).